The sequence spans 266 residues: Undecaprenyl-diphosphatase (266 aa).

Transmembrane regions (helical) follow at residues 1–21 (MTLT…FLPI), 39–59 (QGLA…MIYF), 87–107 (WWVI…KAFI), 111–131 (ARSA…LWYA), 150–172 (LIVG…ITMT), 187–207 (FSFL…TLDL), 218–238 (ALIV…YLFL), and 244–264 (IGML…LLFV).

This sequence belongs to the UppP family.

It localises to the cell inner membrane. The enzyme catalyses di-trans,octa-cis-undecaprenyl diphosphate + H2O = di-trans,octa-cis-undecaprenyl phosphate + phosphate + H(+). Catalyzes the dephosphorylation of undecaprenyl diphosphate (UPP). Confers resistance to bacitracin. In Pseudoalteromonas atlantica (strain T6c / ATCC BAA-1087), this protein is Undecaprenyl-diphosphatase.